Consider the following 352-residue polypeptide: Ion-translocating oxidoreductase complex subunit D (352 aa).

4 helical membrane passes run 20-40 (IMLL…WFFG), 42-62 (GTLF…AIVL), 69-91 (VASH…SIPP), and 123-143 (PAMI…TSWL). Thr-187 is modified (FMN phosphoryl threonine). Helical transmembrane passes span 215–235 (LAGV…VFLL), 242–262 (WHIP…GWLF), 267–287 (LASP…FFIL), 301–321 (LIFG…GGYP), and 322–342 (DGVA…DYYT).

It belongs to the NqrB/RnfD family. The complex is composed of six subunits: RsxA, RsxB, RsxC, RsxD, RsxE and RsxG. It depends on FMN as a cofactor.

The protein localises to the cell inner membrane. Part of a membrane-bound complex that couples electron transfer with translocation of ions across the membrane. Required to maintain the reduced state of SoxR. This chain is Ion-translocating oxidoreductase complex subunit D, found in Salmonella dublin (strain CT_02021853).